The chain runs to 1096 residues: uncharacterized protein (1096 aa).

This sequence belongs to the IIV-6 261R/396L/443R family.

This is an uncharacterized protein from Invertebrate iridescent virus 3 (IIV-3).